The sequence spans 659 residues: Ion-translocating oxidoreductase complex subunit C (659 aa).

2 consecutive 4Fe-4S ferredoxin-type domains span residues 366–397 and 407–436; these read TEMGLSEPEQSCIRCGLCVDACPAGLLPQQLY and KARNHNLFDCIECGACAYVCPSNIPLVQYY. 8 residues coordinate [4Fe-4S] cluster: Cys377, Cys380, Cys383, Cys387, Cys416, Cys419, Cys422, and Cys426.

It belongs to the 4Fe4S bacterial-type ferredoxin family. RnfC subfamily. As to quaternary structure, the complex is composed of six subunits: RnfA, RnfB, RnfC, RnfD, RnfE and RnfG. It depends on [4Fe-4S] cluster as a cofactor.

It is found in the cell inner membrane. Part of a membrane-bound complex that couples electron transfer with translocation of ions across the membrane. The sequence is that of Ion-translocating oxidoreductase complex subunit C from Yersinia pestis bv. Antiqua (strain Nepal516).